The sequence spans 175 residues: Epididymal-specific lipocalin-8 (175 aa).

An N-terminal signal peptide occupies residues 1-22; sequence MEARLLSNVCGFFLVFLLQAES. N-linked (GlcNAc...) asparagine glycans are attached at residues Asn-66 and Asn-74. The cysteines at positions 79 and 166 are disulfide-linked.

It belongs to the calycin superfamily. Lipocalin family. As to expression, predominantly expressed in epididymis.

Its subcellular location is the secreted. Functionally, may play a role in male fertility. May act as a retinoid carrier protein within the epididymis. This Mus musculus (Mouse) protein is Epididymal-specific lipocalin-8 (Lcn8).